An 837-amino-acid chain; its full sequence is Enterin neuropeptides (837 aa).

The first 25 residues, 1-25, serve as a signal peptide directing secretion; that stretch reads MAKHDVTVMTLLLVVCALHVFDAQG. Positions 26 to 47 are excised as a propeptide; sequence TDVKLNDGFLRSGIMNIPFQRR. V57 carries the valine amide modification. The propeptide occupies 61–134; it reads SGFQSPVSPS…ENKRFSKENE (74 aa). V146 bears the Valine amide mark. Residues 150 to 178 constitute a propeptide that is removed on maturation; the sequence is MDLSALEKELIAKLKAADLLSPLETEAPG. Leucine amide is present on L190. A propeptide spanning residues 194–201 is cleaved from the precursor; that stretch reads MPVDVFPR. The residue at position 211 (V211) is a Valine amide. Positions 215 to 234 are excised as a propeptide; that stretch reads SGNGENYFDDLDTFGDISQR. V244 carries the valine amide modification. A propeptide spanning residues 248–266 is cleaved from the precursor; sequence GNTDFSRNPLARLSQVQNR. The residue at position 276 (V276) is a Valine amide. Positions 280 to 285 are excised as a propeptide; the sequence is SVHNIV. V297 bears the Valine amide mark. Positions 301 to 325 are excised as a propeptide; it reads DFEDASEGLDEEEGDIDGYSDDLDV. Valine amide occurs at positions 336, 348, 360, 372, 384, 396, 408, 420, 432, 444, 456, 468, 480, 492, 504, 516, 528, and 540. Residues 544-595 constitute a propeptide that is removed on maturation; the sequence is ELGEDEINFLKEVDAADISRQLAEEDEKEAMVSVDDKETLSNEEDASEDDFE. The disordered stretch occupies residues 567 to 594; the sequence is EEDEKEAMVSVDDKETLSNEEDASEDDF. A compositionally biased stretch (acidic residues) spans 584 to 593; that stretch reads SNEEDASEDD. At E598 the chain carries Pyrrolidone carboxylic acid (Glu); in form ENl'. The residue at position 606 (V606) is a Valine amide. Residues 610–627 constitute a propeptide that is removed on maturation; sequence DEEGDMGVEMEEEMESEK. Residue L637 is modified to Leucine amide. Q641 carries the post-translational modification Pyrrolidone carboxylic acid. V649 carries the valine amide modification. A Pyrrolidone carboxylic acid modification is found at Q653. A valine amide mark is found at V661 and V673. Q677 is modified (pyrrolidone carboxylic acid). A valine amide mark is found at V685 and V697. At Q701 the chain carries Pyrrolidone carboxylic acid. The residue at position 709 (V709) is a Valine amide. Q713 carries the pyrrolidone carboxylic acid modification. Valine amide is present on V721. Residue Q725 is modified to Pyrrolidone carboxylic acid. Valine amide is present on V733. Residues 734–837 constitute a propeptide that is removed on maturation; sequence GKRSGAEDID…DSHIMATSST (104 aa). The interval 772 to 837 is disordered; it reads GQPAAANEEE…DSHIMATSST (66 aa). A compositionally biased stretch (acidic residues) spans 778–791; the sequence is NEEELQQEAAEESE.

As to expression, high expression in gut and CNS.

The protein resides in the secreted. Functionally, reduce interneurons B4/5 activity. May play a regulatory role in nonfeeding behaviors. The sequence is that of Enterin neuropeptides (ENPP) from Aplysia californica (California sea hare).